Here is a 221-residue protein sequence, read N- to C-terminus: Ribonuclease T (221 aa).

The Exonuclease domain occupies 21 to 195 (VVIDIESAGF…YDTIQTAYLF (175 aa)). Mg(2+) is bound by residues D24, E26, H182, and D187. H182 acts as the Proton donor/acceptor in catalysis.

This sequence belongs to the RNase T family. In terms of assembly, homodimer. Mg(2+) serves as cofactor.

Functionally, trims short 3' overhangs of a variety of RNA species, leaving a one or two nucleotide 3' overhang. Responsible for the end-turnover of tRNA: specifically removes the terminal AMP residue from uncharged tRNA (tRNA-C-C-A). Also appears to be involved in tRNA biosynthesis. In Buchnera aphidicola subsp. Cinara cedri (strain Cc), this protein is Ribonuclease T.